The following is a 168-amino-acid chain: Photosystem I assembly protein Ycf3 (168 aa).

TPR repeat units lie at residues 29-62, 66-99, and 117-150; these read AFSY…EEDP, SYTL…NANL, and AQSL…APDN.

This sequence belongs to the Ycf3 family.

The protein localises to the plastid. The protein resides in the chloroplast thylakoid membrane. Essential for the assembly of the photosystem I (PSI) complex. May act as a chaperone-like factor to guide the assembly of the PSI subunits. The protein is Photosystem I assembly protein Ycf3 of Phaeodactylum tricornutum (strain CCAP 1055/1).